The chain runs to 394 residues: Succinate--CoA ligase [ADP-forming] subunit beta (394 aa).

An ATP-grasp domain is found at 9–243 (KDILAGFGIA…YSQLNPLEIA (235 aa)). ATP contacts are provided by residues lysine 45, 52 to 54 (GRG), glutamate 98, valine 101, and glutamate 106. Residues asparagine 198 and aspartate 212 each coordinate Mg(2+). Substrate is bound by residues asparagine 263 and 320–322 (GIM).

The protein belongs to the succinate/malate CoA ligase beta subunit family. As to quaternary structure, heterotetramer of two alpha and two beta subunits. The cofactor is Mg(2+).

The enzyme catalyses succinate + ATP + CoA = succinyl-CoA + ADP + phosphate. The catalysed reaction is GTP + succinate + CoA = succinyl-CoA + GDP + phosphate. Its pathway is carbohydrate metabolism; tricarboxylic acid cycle; succinate from succinyl-CoA (ligase route): step 1/1. Its function is as follows. Succinyl-CoA synthetase functions in the citric acid cycle (TCA), coupling the hydrolysis of succinyl-CoA to the synthesis of either ATP or GTP and thus represents the only step of substrate-level phosphorylation in the TCA. The beta subunit provides nucleotide specificity of the enzyme and binds the substrate succinate, while the binding sites for coenzyme A and phosphate are found in the alpha subunit. This Pelobacter propionicus (strain DSM 2379 / NBRC 103807 / OttBd1) protein is Succinate--CoA ligase [ADP-forming] subunit beta.